The chain runs to 262 residues: Thiazole synthase (262 aa).

Catalysis depends on Lys-97, which acts as the Schiff-base intermediate with DXP. Residues Gly-158, 185 to 186 (AG), and 207 to 208 (NT) contribute to the 1-deoxy-D-xylulose 5-phosphate site. The segment at 243–262 (DKAQASTPTVGQPFWHSAEY) is disordered.

The protein belongs to the ThiG family. As to quaternary structure, homotetramer. Forms heterodimers with either ThiH or ThiS.

It localises to the cytoplasm. It catalyses the reaction [ThiS sulfur-carrier protein]-C-terminal-Gly-aminoethanethioate + 2-iminoacetate + 1-deoxy-D-xylulose 5-phosphate = [ThiS sulfur-carrier protein]-C-terminal Gly-Gly + 2-[(2R,5Z)-2-carboxy-4-methylthiazol-5(2H)-ylidene]ethyl phosphate + 2 H2O + H(+). The protein operates within cofactor biosynthesis; thiamine diphosphate biosynthesis. Functionally, catalyzes the rearrangement of 1-deoxy-D-xylulose 5-phosphate (DXP) to produce the thiazole phosphate moiety of thiamine. Sulfur is provided by the thiocarboxylate moiety of the carrier protein ThiS. In vitro, sulfur can be provided by H(2)S. This chain is Thiazole synthase, found in Neisseria meningitidis serogroup B (strain ATCC BAA-335 / MC58).